A 162-amino-acid polypeptide reads, in one-letter code: MKLDQAARALFLTELVSGFFLAMRYFFKPKATINYPFEKNPISPRFRGEHALRRYPNGEERCIACKLCEAICPAQAITIEAGPRRNDGTRRTTRYDIDMVKCIYCGFCQEACPVDAIVEGPNFEFATETREELYYDKEKLLANGDRWEREIARAIAADAPYR.

4Fe-4S ferredoxin-type domains follow at residues 52–82 (LRRYPNGEERCIACKLCEAICPAQAITIEAG) and 93–122 (TRYDIDMVKCIYCGFCQEACPVDAIVEGPN). [4Fe-4S] cluster is bound by residues Cys62, Cys65, Cys68, Cys72, Cys102, Cys105, Cys108, and Cys112.

It belongs to the complex I 23 kDa subunit family. In terms of assembly, NDH-1 is composed of 14 different subunits. Subunits NuoA, H, J, K, L, M, N constitute the membrane sector of the complex. The cofactor is [4Fe-4S] cluster.

It localises to the cell inner membrane. The catalysed reaction is a quinone + NADH + 5 H(+)(in) = a quinol + NAD(+) + 4 H(+)(out). Its function is as follows. NDH-1 shuttles electrons from NADH, via FMN and iron-sulfur (Fe-S) centers, to quinones in the respiratory chain. The immediate electron acceptor for the enzyme in this species is believed to be ubiquinone. Couples the redox reaction to proton translocation (for every two electrons transferred, four hydrogen ions are translocated across the cytoplasmic membrane), and thus conserves the redox energy in a proton gradient. The polypeptide is NADH-quinone oxidoreductase subunit I (Azorhizobium caulinodans (strain ATCC 43989 / DSM 5975 / JCM 20966 / LMG 6465 / NBRC 14845 / NCIMB 13405 / ORS 571)).